The following is a 152-amino-acid chain: UPF0756 membrane protein JDM1_1594 (152 aa).

Helical transmembrane passes span 25 to 45 (ATVV…LTTI), 52 to 72 (WGVT…QIGF), 85 to 105 (WIAV…VGLL), and 115 to 135 (LVFG…GPII).

The protein belongs to the UPF0756 family.

Its subcellular location is the cell membrane. The protein is UPF0756 membrane protein JDM1_1594 of Lactiplantibacillus plantarum (strain JDM1) (Lactobacillus plantarum).